The chain runs to 392 residues: Succinate--CoA ligase [ADP-forming] subunit beta (392 aa).

The region spanning 9–236 (KELFAAHGVP…PSAADPLEAK (228 aa)) is the ATP-grasp domain. ATP is bound by residues lysine 45, 52 to 54 (GRG), valine 94, and glutamate 99. Asparagine 191 and aspartate 205 together coordinate Mg(2+). Residues asparagine 256 and 318-320 (GIT) each bind substrate.

This sequence belongs to the succinate/malate CoA ligase beta subunit family. As to quaternary structure, heterotetramer of two alpha and two beta subunits. Mg(2+) serves as cofactor.

The enzyme catalyses succinate + ATP + CoA = succinyl-CoA + ADP + phosphate. It catalyses the reaction GTP + succinate + CoA = succinyl-CoA + GDP + phosphate. The protein operates within carbohydrate metabolism; tricarboxylic acid cycle; succinate from succinyl-CoA (ligase route): step 1/1. Its function is as follows. Succinyl-CoA synthetase functions in the citric acid cycle (TCA), coupling the hydrolysis of succinyl-CoA to the synthesis of either ATP or GTP and thus represents the only step of substrate-level phosphorylation in the TCA. The beta subunit provides nucleotide specificity of the enzyme and binds the substrate succinate, while the binding sites for coenzyme A and phosphate are found in the alpha subunit. The sequence is that of Succinate--CoA ligase [ADP-forming] subunit beta from Acidothermus cellulolyticus (strain ATCC 43068 / DSM 8971 / 11B).